Here is a 120-residue protein sequence, read N- to C-terminus: Large ribosomal subunit protein uL22 (120 aa).

The protein belongs to the universal ribosomal protein uL22 family. As to quaternary structure, part of the 50S ribosomal subunit.

This protein binds specifically to 23S rRNA; its binding is stimulated by other ribosomal proteins, e.g. L4, L17, and L20. It is important during the early stages of 50S assembly. It makes multiple contacts with different domains of the 23S rRNA in the assembled 50S subunit and ribosome. Functionally, the globular domain of the protein is located near the polypeptide exit tunnel on the outside of the subunit, while an extended beta-hairpin is found that lines the wall of the exit tunnel in the center of the 70S ribosome. This is Large ribosomal subunit protein uL22 from Corynebacterium kroppenstedtii (strain DSM 44385 / JCM 11950 / CIP 105744 / CCUG 35717).